The following is a 39-amino-acid chain: Photosystem II reaction center protein L (39 aa).

The helical transmembrane segment at 18 to 38 (SLYLGLLFVFVTGVLMSSYFF) threads the bilayer.

This sequence belongs to the PsbL family. As to quaternary structure, PSII is composed of 1 copy each of membrane proteins PsbA, PsbB, PsbC, PsbD, PsbE, PsbF, PsbH, PsbI, PsbJ, PsbK, PsbL, PsbM, PsbT, PsbX, PsbY, PsbZ, Psb30/Ycf12, peripheral proteins PsbO, CyanoQ (PsbQ), PsbU, PsbV and a large number of cofactors. It forms dimeric complexes.

The protein resides in the cellular thylakoid membrane. One of the components of the core complex of photosystem II (PSII). PSII is a light-driven water:plastoquinone oxidoreductase that uses light energy to abstract electrons from H(2)O, generating O(2) and a proton gradient subsequently used for ATP formation. It consists of a core antenna complex that captures photons, and an electron transfer chain that converts photonic excitation into a charge separation. This subunit is found at the monomer-monomer interface and is required for correct PSII assembly and/or dimerization. The protein is Photosystem II reaction center protein L of Synechococcus sp. (strain CC9902).